Consider the following 198-residue polypeptide: GTP-binding protein Di-Ras1 (198 aa).

GTP is bound by residues 17–22 (GVGKSS), 33–39 (RDTYIPT), 61–65 (DTTGS), 121–125 (NKCDE), Ala151, and 151–152 (AK). Residues 36-44 (YIPTIEDTY) carry the Effector region motif. Over residues 178–192 (DGKRSGKQKRTDRVK) the composition is skewed to basic and acidic residues. The segment at 178 to 198 (DGKRSGKQKRTDRVKGKCTLM) is disordered. Cys195 carries the post-translational modification Cysteine methyl ester. The S-geranylgeranyl cysteine moiety is linked to residue Cys195. A propeptide spans 196–198 (TLM) (removed in mature form).

The protein belongs to the small GTPase superfamily. Di-Ras family. Highly expressed in heart and brain.

Its subcellular location is the cell membrane. In terms of biological role, displays low GTPase activity and exists predominantly in the GTP-bound form. This is GTP-binding protein Di-Ras1 (DIRAS1) from Homo sapiens (Human).